The sequence spans 570 residues: Sulfite reductase [NADPH] hemoprotein beta-component (570 aa).

The [4Fe-4S] cluster site is built by Cys-434, Cys-440, Cys-479, and Cys-483. Cys-483 serves as a coordination point for siroheme.

This sequence belongs to the nitrite and sulfite reductase 4Fe-4S domain family. In terms of assembly, alpha(8)-beta(8). The alpha component is a flavoprotein, the beta component is a hemoprotein. It depends on siroheme as a cofactor. [4Fe-4S] cluster is required as a cofactor.

The catalysed reaction is hydrogen sulfide + 3 NADP(+) + 3 H2O = sulfite + 3 NADPH + 4 H(+). The protein operates within sulfur metabolism; hydrogen sulfide biosynthesis; hydrogen sulfide from sulfite (NADPH route): step 1/1. In terms of biological role, component of the sulfite reductase complex that catalyzes the 6-electron reduction of sulfite to sulfide. This is one of several activities required for the biosynthesis of L-cysteine from sulfate. This Enterobacter sp. (strain 638) protein is Sulfite reductase [NADPH] hemoprotein beta-component.